Here is an 82-residue protein sequence, read N- to C-terminus: ATP synthase subunit c (82 aa).

A run of 2 helical transmembrane segments spans residues M5–I25 and F55–F75.

It belongs to the ATPase C chain family. As to quaternary structure, F-type ATPases have 2 components, F(1) - the catalytic core - and F(0) - the membrane proton channel. F(1) has five subunits: alpha(3), beta(3), gamma(1), delta(1), epsilon(1). F(0) has three main subunits: a(1), b(2) and c(10-14). The alpha and beta chains form an alternating ring which encloses part of the gamma chain. F(1) is attached to F(0) by a central stalk formed by the gamma and epsilon chains, while a peripheral stalk is formed by the delta and b chains.

Its subcellular location is the cell membrane. F(1)F(0) ATP synthase produces ATP from ADP in the presence of a proton or sodium gradient. F-type ATPases consist of two structural domains, F(1) containing the extramembraneous catalytic core and F(0) containing the membrane proton channel, linked together by a central stalk and a peripheral stalk. During catalysis, ATP synthesis in the catalytic domain of F(1) is coupled via a rotary mechanism of the central stalk subunits to proton translocation. Functionally, key component of the F(0) channel; it plays a direct role in translocation across the membrane. A homomeric c-ring of between 10-14 subunits forms the central stalk rotor element with the F(1) delta and epsilon subunits. The chain is ATP synthase subunit c from Carboxydothermus hydrogenoformans (strain ATCC BAA-161 / DSM 6008 / Z-2901).